Consider the following 495-residue polypeptide: MADRNLRDLLAPWVPDAPSRALREMTLDSRVAAAGDLFVAVVGHQADGRRYIPQAIAQGVAAIIAEAKDEATDGEIREMHGVPVIYLSQLNERLSALAGRFYHEPSDNLRLVGVTGTNGKTTTTQLLAQWSQLLGEPSAVMGTVGNGLLGKVIPTENTTGSAVDVQHELAGLVDQGATFCAMEVSSHGLVQHRVAALKFAASVFTNLSRDHLDYHGDMEHYEAAKWLLYSAHHCGQAIINADDEVGRRWLAKLPDAVAVSMEDHINPNCHGRWLKATDVNYHDSGATIRFSSSWGDGEIESRLMGAFNVSNLLLALATLLALGYPLADLLKTAARLQPVCGRMEVFTAPGKPTVVVDYAHTPDALEKALQAARLHCAGKLWCVFGCGGDRDKGKRPLMGAIAEEFADVAVVTDDNPRTEEPRAIINDILAGMLDAGYAKVMEGRAEAVTCAVMQAKENDVVLVAGKGHEDYQIVGNQRLDYSDRVTVARLLGVIA.

UDP-N-acetyl-alpha-D-muramoyl-L-alanyl-D-glutamate contacts are provided by residues L27, S29, and H44 to A46. Position 116-122 (G116–T122) interacts with ATP. Residues N157, T158–T159, S185, Q191, and R193 each bind UDP-N-acetyl-alpha-D-muramoyl-L-alanyl-D-glutamate. N6-carboxylysine is present on K225. Meso-2,6-diaminopimelate contacts are provided by residues R390, D414–R417, G465, and E469. Residues D414–R417 carry the Meso-diaminopimelate recognition motif motif.

It belongs to the MurCDEF family. MurE subfamily. It depends on Mg(2+) as a cofactor. Carboxylation is probably crucial for Mg(2+) binding and, consequently, for the gamma-phosphate positioning of ATP.

It is found in the cytoplasm. It carries out the reaction UDP-N-acetyl-alpha-D-muramoyl-L-alanyl-D-glutamate + meso-2,6-diaminopimelate + ATP = UDP-N-acetyl-alpha-D-muramoyl-L-alanyl-gamma-D-glutamyl-meso-2,6-diaminopimelate + ADP + phosphate + H(+). Its pathway is cell wall biogenesis; peptidoglycan biosynthesis. Its function is as follows. Catalyzes the addition of meso-diaminopimelic acid to the nucleotide precursor UDP-N-acetylmuramoyl-L-alanyl-D-glutamate (UMAG) in the biosynthesis of bacterial cell-wall peptidoglycan. In Escherichia coli O6:H1 (strain CFT073 / ATCC 700928 / UPEC), this protein is UDP-N-acetylmuramoyl-L-alanyl-D-glutamate--2,6-diaminopimelate ligase.